The chain runs to 275 residues: Cis-2,3-dihydrobiphenyl-2,3-diol dehydrogenase (275 aa).

Leucine 9–valine 33 contributes to the NAD(+) binding site. Residue serine 140 coordinates substrate. Tyrosine 153 acts as the Proton acceptor in catalysis.

Belongs to the short-chain dehydrogenases/reductases (SDR) family.

It carries out the reaction (2R,3S)-3-phenylcyclohexa-3,5-diene-1,2-diol + NAD(+) = biphenyl-2,3-diol + NADH + H(+). It functions in the pathway xenobiotic degradation; biphenyl degradation; 2-hydroxy-2,4-pentadienoate and benzoate from biphenyl: step 2/4. In Metapseudomonas furukawaii (Pseudomonas furukawaii), this protein is Cis-2,3-dihydrobiphenyl-2,3-diol dehydrogenase (bphB).